A 242-amino-acid chain; its full sequence is Dihydropteridine reductase (242 aa).

Residue 12–36 (LVYGGRGALGSRCVQAFRARNWWVA) coordinates NADP(+). N6-succinyllysine occurs at positions 71, 77, 94, and 100. Tyrosine 148 acts as the Proton acceptor in catalysis.

The protein belongs to the short-chain dehydrogenases/reductases (SDR) family. In terms of assembly, homodimer.

The enzyme catalyses 5,6,7,8-tetrahydropteridine + NAD(+) = 6,7-dihydropteridine + NADH + H(+). The catalysed reaction is 5,6,7,8-tetrahydropteridine + NADP(+) = 6,7-dihydropteridine + NADPH + H(+). Catalyzes the conversion of quinonoid dihydrobiopterin into tetrahydrobiopterin. The polypeptide is Dihydropteridine reductase (QDPR) (Bos taurus (Bovine)).